The following is a 744-amino-acid chain: Spalt-like protein sem-4 (744 aa).

The interval 6 to 32 is disordered; the sequence is AEMAAVSSRRKQSKPRRMSGEGDAMMS. Residues 13 to 22 are compositionally biased toward basic residues; that stretch reads SRRKQSKPRR. 4 C2H2-type zinc fingers span residues 99 to 124, 305 to 327, 333 to 355, and 411 to 433; these read SSCP…LDAH, NQCI…YRTH, FKCK…MGVH, and QQCP…ITEH. The span at 487-497 shows a compositional bias: polar residues; it reads KNDSSPNTDTS. 2 disordered regions span residues 487–530 and 542–562; these read KNDS…RQDI and KLEE…PKNE. The span at 499-509 shows a compositional bias: basic and acidic residues; it reads VEEKITRDDPP. A compositionally biased stretch (low complexity) spans 513–525; the sequence is SLSPSNSSDSSSS. Residues 551–561 are compositionally biased toward polar residues; it reads QQVSTTPNPKN. 3 consecutive C2H2-type zinc fingers follow at residues 589-611, 617-639, and 701-723; these read HQCG…MRTH, FKCD…MGTH, and TVCS…LKEH. Positions 725–744 are disordered; sequence NNGSSAAPTPLASAATPPPS. Over residues 728 to 744 the composition is skewed to low complexity; sequence SSAAPTPLASAATPPPS.

Belongs to the sal C2H2-type zinc-finger protein family.

It localises to the nucleus. In terms of biological role, transcription factor, involved in positive and negative modulation of transcription. Binds to multiple DNA sequence motifs in the regulatory elements of target genes, including homeobox selector egl-5 and LIM homeobox mec-3. Involved in cell-fate regulation in multiple lineages, including neuronal, mesodermal and vulval. Required to regulate the fate of PLM touch receptor neurons, acting via negative modulation of transcription of egl-5 and mec-3. May modulate gene expression by interacting with different transcription factors during neuronal and mesodermal cell development. Promotes the proliferative sex myoblast (SM) fate, in a cell autonomous manner, acting via the SoxC transcription factor sem-2. Involved in vulval cell-fate determination, acting by regulating expression of homeobox protein lin-39, and may link lin-39 to incoming signaling pathways. Plays a role in detoxification of reactive oxygen species (ROS), by regulating expression of transcription factor skn-1 and the phase II detoxification genes. The polypeptide is Spalt-like protein sem-4 (Caenorhabditis elegans).